The sequence spans 667 residues: MADLSSRVNELHDLLNQYSYEYYVEDNPSVPDSEYDKLLHELIKIEEEHPEYKTVDSPTVRVGGEAQASFKKVNHDTPMLSLGNAFNEDDLRKFDQRIREQIGNVEYMCELKIDGLAVSLKYVDGYFVQGLTRGDGTTGEDITENLKTIHAIPLKMKEPLNVEVRGEAYMPRRSFLRLNEEKEKNDEQLFANPRNAAAGSLRQLDSKLTAKRKLSVFIYSVNDFTDFNARSQSEALDELDKLGFTTNKNRARVNNIDGVLEYIEKWTSQRESLPYDIDGIVIKVNDLDQQDEMGFTQKSPRWAIAYKFPAEEVVTKLLDIELSIGRTGVVTPTAILEPVKVAGTTVSRASLHNEDLIHDRDIRIGDSVVVKKAGDIIPEVVRSIPERRPEDAVTYHMPTHCPSCGHELVRIEGEVALRCINPKCQAQLVEGLIHFVSRQAMNIDGLGTKIIQQLYQSELIKDVADIFYLTEEDLLPLDRMGQKKVDNLLAAIQQAKDNSLENLLFGLGIRHLGVKASQVLAEKYETIDRLLTVTEAELVEIHDIGDKVAQSVVTYLENEDIRALIQKLKDKHVNMIYKGIKTSDIEGHPEFSGKTIVLTGKLHQMTRNEASKWLASQGAKVTSSVTKNTDVVIAGEDAGSKLTKAQSLGIEIWTEQQFVDKQNELNS.

NAD(+) is bound by residues D32–D36, S81–L82, and E110. K112 functions as the N6-AMP-lysine intermediate in the catalytic mechanism. Positions 133, 167, 283, and 307 each coordinate NAD(+). 4 residues coordinate Zn(2+): C401, C404, C419, and C424. The 82-residue stretch at E586–S667 folds into the BRCT domain.

Belongs to the NAD-dependent DNA ligase family. LigA subfamily. Requires Mg(2+) as cofactor. Mn(2+) is required as a cofactor.

The enzyme catalyses NAD(+) + (deoxyribonucleotide)n-3'-hydroxyl + 5'-phospho-(deoxyribonucleotide)m = (deoxyribonucleotide)n+m + AMP + beta-nicotinamide D-nucleotide.. In terms of biological role, DNA ligase that catalyzes the formation of phosphodiester linkages between 5'-phosphoryl and 3'-hydroxyl groups in double-stranded DNA using NAD as a coenzyme and as the energy source for the reaction. It is essential for DNA replication and repair of damaged DNA. This is DNA ligase from Staphylococcus aureus (strain Mu3 / ATCC 700698).